A 388-amino-acid chain; its full sequence is Staphopain A (388 aa).

The signal sequence occupies residues 1 to 25 (MKRNFPKLIALSLILSLSVTPIANA). A propeptide spanning residues 26 to 214 (ESNSNIKAKD…TSQFKSNNYT (189 aa)) is cleaved from the precursor. Catalysis depends on residues Cys238, His334, and Asn355.

Belongs to the peptidase C47 family. In the cytoplasm, prematurely activated/folded ScpA forms a stable non-covalent complex with ScpB. Post-translationally, cleavage leads to the activation of ScpA probably by an auto-catalytic manner.

It is found in the secreted. The enzyme catalyses Broad endopeptidase action on proteins including elastin, but rather limited hydrolysis of small-molecule substrates. Assays are conveniently made with hemoglobin, casein or Z-Phe-Arg-NHMec as substrate.. With respect to regulation, prematurely activated/folded staphopain A is inhibited by staphostatin A (ScpB), which is probably required to protect staphylococcal cytoplasmic proteins from degradation by ScpA. Cysteine protease that plays an important role in the inhibition of host innate immune response. Cleaves host elastins found in connective tissues, pulmonary surfactant protein A in the lungs, and the chemokine receptor CXCR2 on leukocytes. Proteolytic cleavage of surfactant protein A impairs bacterial phagocytosis by neutrophils while CXCR2 degradation blocks neutrophil activation and chemotaxis. Additionally, promotes vascular leakage by activating the plasma kallikerin/kinin system, resulting in hypotension. The protein is Staphopain A (sspP) of Staphylococcus aureus (strain MSSA476).